Here is a 290-residue protein sequence, read N- to C-terminus: 4-hydroxy-tetrahydrodipicolinate synthase (290 aa).

Thr44 contributes to the pyruvate binding site. The active-site Proton donor/acceptor is the Tyr132. Lys160 (schiff-base intermediate with substrate) is an active-site residue. Residue Ile202 coordinates pyruvate.

It belongs to the DapA family. In terms of assembly, homotetramer; dimer of dimers.

The protein localises to the cytoplasm. The catalysed reaction is L-aspartate 4-semialdehyde + pyruvate = (2S,4S)-4-hydroxy-2,3,4,5-tetrahydrodipicolinate + H2O + H(+). It functions in the pathway amino-acid biosynthesis; L-lysine biosynthesis via DAP pathway; (S)-tetrahydrodipicolinate from L-aspartate: step 3/4. Functionally, catalyzes the condensation of (S)-aspartate-beta-semialdehyde [(S)-ASA] and pyruvate to 4-hydroxy-tetrahydrodipicolinate (HTPA). This is 4-hydroxy-tetrahydrodipicolinate synthase from Geobacter metallireducens (strain ATCC 53774 / DSM 7210 / GS-15).